An 81-amino-acid chain; its full sequence is Photosystem I iron-sulfur center (81 aa).

4Fe-4S ferredoxin-type domains follow at residues 2 to 31 (SHFVKIYDTCIGCTQCVRACPTDVLEMIPW) and 39 to 68 (IASAPRTEDCVGCKRCESACPTDFLSVRVY). 8 residues coordinate [4Fe-4S] cluster: Cys-11, Cys-14, Cys-17, Cys-21, Cys-48, Cys-51, Cys-54, and Cys-58.

The eukaryotic PSI reaction center is composed of at least 11 subunits. Requires [4Fe-4S] cluster as cofactor.

The protein resides in the plastid thylakoid membrane. The enzyme catalyses reduced [plastocyanin] + hnu + oxidized [2Fe-2S]-[ferredoxin] = oxidized [plastocyanin] + reduced [2Fe-2S]-[ferredoxin]. In terms of biological role, apoprotein for the two 4Fe-4S centers FA and FB of photosystem I (PSI); essential for photochemical activity. FB is the terminal electron acceptor of PSI, donating electrons to ferredoxin. The C-terminus interacts with PsaA/B/D and helps assemble the protein into the PSI complex. Required for binding of PsaD and PsaE to PSI. PSI is a plastocyanin-ferredoxin oxidoreductase, converting photonic excitation into a charge separation, which transfers an electron from the donor P700 chlorophyll pair to the spectroscopically characterized acceptors A0, A1, FX, FA and FB in turn. In Cuscuta exaltata (Tall dodder), this protein is Photosystem I iron-sulfur center.